A 116-amino-acid chain; its full sequence is uncharacterized protein (116 aa).

The next 3 helical transmembrane spans lie at Phe8 to Ala28, Gly39 to Phe59, and Phe75 to Val95.

This sequence to M.jannaschii MJ1580.

It localises to the cell membrane. This is an uncharacterized protein from Methanothermobacter thermautotrophicus (strain ATCC 29096 / DSM 1053 / JCM 10044 / NBRC 100330 / Delta H) (Methanobacterium thermoautotrophicum).